The following is a 402-amino-acid chain: Xylose/arabinose-binding protein XylF (402 aa).

Residues 38–58 (GIIAGVLAAFGAGFGSGYVTA) form a helical membrane-spanning segment.

Belongs to the bacterial solute-binding protein 2 family. In terms of assembly, the complex is composed of two ATP-binding proteins (XylG), two transmembrane proteins (XylH) and a solute-binding protein (XylF).

The protein localises to the cell membrane. In terms of biological role, part of the ABC transporter complex XylFGH involved in the uptake of xylose and arabinose. In Sulfolobus acidocaldarius (strain ATCC 33909 / DSM 639 / JCM 8929 / NBRC 15157 / NCIMB 11770), this protein is Xylose/arabinose-binding protein XylF.